The following is a 550-amino-acid chain: Glucose-6-phosphate isomerase (550 aa).

Residues 164–165 (GS), 215–220 (SKTFTT), Gln359, Glu363, and His394 each bind D-glucose 6-phosphate. Glu363 serves as the catalytic Proton donor. Residue His394 is part of the active site. Thr455 is modified (phosphothreonine). Lys516 lines the D-glucose 6-phosphate pocket. The active site involves Lys516.

This sequence belongs to the GPI family. Homodimer.

It is found in the cytoplasm. Its subcellular location is the cytosol. It catalyses the reaction alpha-D-glucose 6-phosphate = beta-D-fructose 6-phosphate. It participates in carbohydrate degradation; glycolysis; D-glyceraldehyde 3-phosphate and glycerone phosphate from D-glucose: step 2/4. In terms of biological role, in the cytoplasm, catalyzes the conversion of glucose-6-phosphate to fructose-6-phosphate, the second step in glycolysis, and the reverse reaction during gluconeogenesis. This chain is Glucose-6-phosphate isomerase (pgi1), found in Schizosaccharomyces pombe (strain 972 / ATCC 24843) (Fission yeast).